Consider the following 342-residue polypeptide: Holliday junction branch migration complex subunit RuvB (342 aa).

Residues 1-21 (MSVEHSPVDPSAEPPEKAEEA) form a disordered region. Residues 1-184 (MSVEHSPVDP…FGFTAQLDYY (184 aa)) form a large ATPase domain (RuvB-L) region. ATP contacts are provided by residues L23, R24, G65, K68, T69, T70, 131–133 (EDF), R174, Y184, and R221. Residue T69 coordinates Mg(2+). The tract at residues 185-255 (EVADLERIVT…GAETALDLYE (71 aa)) is small ATPAse domain (RuvB-S). The head domain (RuvB-H) stretch occupies residues 258–342 (PLGLDRLDRA…PPDSSGEGLF (85 aa)). DNA contacts are provided by R313 and R318.

It belongs to the RuvB family. In terms of assembly, homohexamer. Forms an RuvA(8)-RuvB(12)-Holliday junction (HJ) complex. HJ DNA is sandwiched between 2 RuvA tetramers; dsDNA enters through RuvA and exits via RuvB. An RuvB hexamer assembles on each DNA strand where it exits the tetramer. Each RuvB hexamer is contacted by two RuvA subunits (via domain III) on 2 adjacent RuvB subunits; this complex drives branch migration. In the full resolvosome a probable DNA-RuvA(4)-RuvB(12)-RuvC(2) complex forms which resolves the HJ.

Its subcellular location is the cytoplasm. It catalyses the reaction ATP + H2O = ADP + phosphate + H(+). Its function is as follows. The RuvA-RuvB-RuvC complex processes Holliday junction (HJ) DNA during genetic recombination and DNA repair, while the RuvA-RuvB complex plays an important role in the rescue of blocked DNA replication forks via replication fork reversal (RFR). RuvA specifically binds to HJ cruciform DNA, conferring on it an open structure. The RuvB hexamer acts as an ATP-dependent pump, pulling dsDNA into and through the RuvAB complex. RuvB forms 2 homohexamers on either side of HJ DNA bound by 1 or 2 RuvA tetramers; 4 subunits per hexamer contact DNA at a time. Coordinated motions by a converter formed by DNA-disengaged RuvB subunits stimulates ATP hydrolysis and nucleotide exchange. Immobilization of the converter enables RuvB to convert the ATP-contained energy into a lever motion, pulling 2 nucleotides of DNA out of the RuvA tetramer per ATP hydrolyzed, thus driving DNA branch migration. The RuvB motors rotate together with the DNA substrate, which together with the progressing nucleotide cycle form the mechanistic basis for DNA recombination by continuous HJ branch migration. Branch migration allows RuvC to scan DNA until it finds its consensus sequence, where it cleaves and resolves cruciform DNA. The protein is Holliday junction branch migration complex subunit RuvB of Cutibacterium acnes (strain DSM 16379 / KPA171202) (Propionibacterium acnes).